A 122-amino-acid polypeptide reads, in one-letter code: Large ribosomal subunit protein uL14 (122 aa).

The protein belongs to the universal ribosomal protein uL14 family. Part of the 50S ribosomal subunit. Forms a cluster with proteins L3 and L19. In the 70S ribosome, L14 and L19 interact and together make contacts with the 16S rRNA in bridges B5 and B8.

In terms of biological role, binds to 23S rRNA. Forms part of two intersubunit bridges in the 70S ribosome. The polypeptide is Large ribosomal subunit protein uL14 (Nitrosomonas europaea (strain ATCC 19718 / CIP 103999 / KCTC 2705 / NBRC 14298)).